We begin with the raw amino-acid sequence, 317 residues long: Flavin-dependent thymidylate synthase (317 aa).

Ser-46 is a binding site for FAD. An insert region spans residues 55 to 166; the sequence is FEWKKEKWIE…ELETDMDFYT (112 aa). The 218-residue stretch at 100-317 folds into the ThyX domain; it reads AVKERIKEAF…YRGTDKKNVI (218 aa). DUMP-binding positions include 178-181, 189-193, and Arg-259; these read QWMR and EVSKR. FAD contacts are provided by residues 181–183 and Glu-189; that span reads RHR. Positions 181 to 191 match the ThyX motif motif; sequence RHRFGSYNEVS. FAD is bound at residue Asn-281. Position 286 (Arg-286) interacts with dUMP. The Involved in ionization of N3 of dUMP, leading to its activation role is filled by Arg-286.

It belongs to the thymidylate synthase ThyX family. As to quaternary structure, homotetramer. The cofactor is FAD.

The enzyme catalyses dUMP + (6R)-5,10-methylene-5,6,7,8-tetrahydrofolate + NADPH + H(+) = dTMP + (6S)-5,6,7,8-tetrahydrofolate + NADP(+). It functions in the pathway pyrimidine metabolism; dTTP biosynthesis. Functionally, catalyzes the reductive methylation of 2'-deoxyuridine-5'-monophosphate (dUMP) to 2'-deoxythymidine-5'-monophosphate (dTMP) while utilizing 5,10-methylenetetrahydrofolate (mTHF) as the methyl donor, and NADPH and FADH(2) as the reductant. The sequence is that of Flavin-dependent thymidylate synthase from Aquifex aeolicus (strain VF5).